A 329-amino-acid chain; its full sequence is Neuropeptides B/W receptor type 1 (329 aa).

Over 1 to 39 the chain is Extracellular; the sequence is MHNLSLFEPGRGNVSCGGPFLGCPNESNPAPLPLPQPLA. N-linked (GlcNAc...) asparagine glycosylation is found at asparagine 3, asparagine 13, and asparagine 25. A helical membrane pass occupies residues 40–63; sequence VAVPVVYGVICAVGLAGNSAVLYV. Residues 64 to 74 lie on the Cytoplasmic side of the membrane; that stretch reads LLRTPRMKTVT. The helical transmembrane segment at 75–99 threads the bilayer; the sequence is NVFILNLAIADELFTLVLPINIADF. At 100-114 the chain is on the extracellular side; sequence LLRRWPFGEVMCKLI. The cysteines at positions 111 and 190 are disulfide-linked. Residues 115 to 134 form a helical membrane-spanning segment; it reads VAVDQYNTFSSLYFLAVMSA. Topologically, residues 135–159 are cytoplasmic; the sequence is DRYLVVLATAESRRVSGRTYGAARA. A helical transmembrane segment spans residues 160-179; it reads VSLAVWALVTLVVLPFAVFA. Residues 180–204 lie on the Extracellular side of the membrane; the sequence is RLDEEQGRRQCVLVFPQPEAFWWRA. Residues 205 to 226 traverse the membrane as a helical segment; it reads SRLYTLVLGFAIPVSTICALYI. Residues 227–250 lie on the Cytoplasmic side of the membrane; it reads TLLCRLRAIQLDSHAKALDRAKKR. A helical transmembrane segment spans residues 251 to 275; it reads VTLLVVAILAVCLLCWTPYHLSTIV. At 276–285 the chain is on the extracellular side; the sequence is ALTTDLPQTP. The chain crosses the membrane as a helical span at residues 286-300; the sequence is LVIGISYFITSLSYA. Topologically, residues 301-329 are cytoplasmic; sequence NSCLNPFLYAFLDDSFRRSLRQLVSCRTA.

Belongs to the G-protein coupled receptor 1 family.

The protein resides in the cell membrane. Its function is as follows. Interacts specifically with a number of opioid ligands. Receptor for neuropeptides B and W, which may be involved in neuroendocrine system regulation, food intake and the organization of other signals. This is Neuropeptides B/W receptor type 1 (Npbwr1) from Rattus norvegicus (Rat).